A 320-amino-acid chain; its full sequence is Histidine decarboxylase proenzyme (320 aa).

A propeptide spanning residues 2–11 is cleaved from the precursor; sequence NKNLEANRNR. A Pyruvic acid (Ser) modification is found at serine 98. Glutamate 215 acts as the Proton donor in catalysis.

As to quaternary structure, the proenzyme is a hexamer of identical pi chains; each pi chain monomer is cleaved to form a small (or beta) chain and a large (or alpha) chain by non-hydrolytic self-catalysis. Requires pyruvate as cofactor.

The enzyme catalyses L-histidine + H(+) = histamine + CO2. This is Histidine decarboxylase proenzyme (hdc) from Clostridium perfringens (strain ATCC 13124 / DSM 756 / JCM 1290 / NCIMB 6125 / NCTC 8237 / Type A).